A 232-amino-acid polypeptide reads, in one-letter code: GTP cyclohydrolase III (232 aa).

The protein belongs to the archaeal-type GTP cyclohydrolase family.

The enzyme catalyses GTP + 3 H2O = 2-amino-5-formylamino-6-(5-phospho-D-ribosylamino)pyrimidin-4(3H)-one + 2 phosphate + 2 H(+). Its function is as follows. Catalyzes the formation of 2-amino-5-formylamino-6-ribofuranosylamino-4(3H)-pyrimidinone ribonucleotide monophosphate and inorganic phosphate from GTP. Also has an independent pyrophosphate phosphohydrolase activity. The protein is GTP cyclohydrolase III of Saccharolobus islandicus (strain Y.G.57.14 / Yellowstone #1) (Sulfolobus islandicus).